The sequence spans 154 residues: Large ribosomal subunit protein uL30 (154 aa).

Belongs to the universal ribosomal protein uL30 family. Part of the 50S ribosomal subunit.

The sequence is that of Large ribosomal subunit protein uL30 from Methanoregula boonei (strain DSM 21154 / JCM 14090 / 6A8).